Consider the following 433-residue polypeptide: Ribosomal protein uS12 methylthiotransferase RimO (433 aa).

In terms of domain architecture, MTTase N-terminal spans 9–124 (NKINVITLGC…LLKALGADYR (116 aa)). The [4Fe-4S] cluster site is built by Cys-18, Cys-53, Cys-87, Cys-148, Cys-152, and Cys-155. Residues 134–364 (TTPKNYAYLK…MDLQSQISWD (231 aa)) enclose the Radical SAM core domain. Residues 367-433 (QEKLGQTFRC…TEFDLYGEPA (67 aa)) enclose the TRAM domain.

It belongs to the methylthiotransferase family. RimO subfamily. [4Fe-4S] cluster is required as a cofactor.

It localises to the cytoplasm. It catalyses the reaction L-aspartate(89)-[ribosomal protein uS12]-hydrogen + (sulfur carrier)-SH + AH2 + 2 S-adenosyl-L-methionine = 3-methylsulfanyl-L-aspartate(89)-[ribosomal protein uS12]-hydrogen + (sulfur carrier)-H + 5'-deoxyadenosine + L-methionine + A + S-adenosyl-L-homocysteine + 2 H(+). Catalyzes the methylthiolation of an aspartic acid residue of ribosomal protein uS12. The polypeptide is Ribosomal protein uS12 methylthiotransferase RimO (Flavobacterium psychrophilum (strain ATCC 49511 / DSM 21280 / CIP 103535 / JIP02/86)).